The primary structure comprises 294 residues: 4-hydroxy-tetrahydrodipicolinate synthase (294 aa).

Threonine 47 lines the pyruvate pocket. Residue tyrosine 135 is the Proton donor/acceptor of the active site. Residue lysine 163 is the Schiff-base intermediate with substrate of the active site. Residue isoleucine 206 participates in pyruvate binding.

This sequence belongs to the DapA family. Homodimer.

It localises to the cytoplasm. The enzyme catalyses L-aspartate 4-semialdehyde + pyruvate = (2S,4S)-4-hydroxy-2,3,4,5-tetrahydrodipicolinate + H2O + H(+). The protein operates within amino-acid biosynthesis; L-lysine biosynthesis via DAP pathway; (S)-tetrahydrodipicolinate from L-aspartate: step 3/4. In terms of biological role, catalyzes the condensation of (S)-aspartate-beta-semialdehyde [(S)-ASA] and pyruvate to 4-hydroxy-tetrahydrodipicolinate (HTPA). The sequence is that of 4-hydroxy-tetrahydrodipicolinate synthase from Staphylococcus carnosus (strain TM300).